The sequence spans 196 residues: MSASRFIKCVTVGDGAVGKTCMLISYTSNTFPTDYVPTVFDNFSANVVVDGNTVNLGLWDTAGQEDYNRLRPLSYRGADVFILAFSLISKASYENVAKKWIPELRHYAPGVPIILVGTKLDLRDDKQFFIDHPGAVPITTNQGEELKKLIGSPIYIECSSKTQQNVKAVFDAAIKVVLQPPKQKKKKKNKNRCVFL.

Ala16 to Cys21 provides a ligand contact to GTP. The Effector region motif lies at Tyr35 to Phe43. GTP contacts are provided by residues Lys119–Asp121 and Ser159–Lys161. Cys193 carries the post-translational modification Cysteine methyl ester. Cys193 is lipidated: S-geranylgeranyl cysteine. Residues Val194–Leu196 constitute a propeptide, removed in mature form.

It belongs to the small GTPase superfamily. Rho family. As to quaternary structure, interacts with GDI1 and ROPGEF8 homodimer. Binds to SPK1. In terms of tissue distribution, ubiquitous. Preferentially expressed at the tip of root hairs.

Its subcellular location is the cytoplasm. It localises to the membrane. It is found in the cell membrane. Involved in cell polarity control during the actin-dependent tip growth of root hairs, thus regulating root hair length and root hair initiation. Functionally, inactive GDP-bound Rho GTPases reside in the cytosol, are found in a complex with Rho GDP-dissociation inhibitors (Rho GDIs), and are released from the GDI protein in order to translocate to membranes upon activation. The sequence is that of Rac-like GTP-binding protein ARAC5 from Arabidopsis thaliana (Mouse-ear cress).